A 337-amino-acid chain; its full sequence is Ketol-acid reductoisomerase (NADP(+)) (337 aa).

Positions 3-183 (VEMFYDADAD…GGARAGVIKT (181 aa)) constitute a KARI N-terminal Rossmann domain. NADP(+) contacts are provided by residues 26 to 29 (YGSQ), lysine 49, serine 52, serine 54, and 84 to 87 (DTAQ). Residue histidine 109 is part of the active site. Glycine 135 contacts NADP(+). A KARI C-terminal knotted domain is found at 184-329 (TFKEETETDL…KKLRDLMSWV (146 aa)). Aspartate 192, glutamate 196, glutamate 228, and glutamate 232 together coordinate Mg(2+). Serine 253 is a substrate binding site.

The protein belongs to the ketol-acid reductoisomerase family. Requires Mg(2+) as cofactor.

The enzyme catalyses (2R)-2,3-dihydroxy-3-methylbutanoate + NADP(+) = (2S)-2-acetolactate + NADPH + H(+). It catalyses the reaction (2R,3R)-2,3-dihydroxy-3-methylpentanoate + NADP(+) = (S)-2-ethyl-2-hydroxy-3-oxobutanoate + NADPH + H(+). The protein operates within amino-acid biosynthesis; L-isoleucine biosynthesis; L-isoleucine from 2-oxobutanoate: step 2/4. Its pathway is amino-acid biosynthesis; L-valine biosynthesis; L-valine from pyruvate: step 2/4. Involved in the biosynthesis of branched-chain amino acids (BCAA). Catalyzes an alkyl-migration followed by a ketol-acid reduction of (S)-2-acetolactate (S2AL) to yield (R)-2,3-dihydroxy-isovalerate. In the isomerase reaction, S2AL is rearranged via a Mg-dependent methyl migration to produce 3-hydroxy-3-methyl-2-ketobutyrate (HMKB). In the reductase reaction, this 2-ketoacid undergoes a metal-dependent reduction by NADPH to yield (R)-2,3-dihydroxy-isovalerate. The sequence is that of Ketol-acid reductoisomerase (NADP(+)) from Mycolicibacterium vanbaalenii (strain DSM 7251 / JCM 13017 / BCRC 16820 / KCTC 9966 / NRRL B-24157 / PYR-1) (Mycobacterium vanbaalenii).